We begin with the raw amino-acid sequence, 396 residues long: Ribosomal RNA large subunit methyltransferase I (396 aa).

The PUA domain occupies 2–79; that stretch reads AVRIKLKPGR…REEEIDREFF (78 aa).

This sequence belongs to the methyltransferase superfamily. RlmI family.

The protein localises to the cytoplasm. The catalysed reaction is cytidine(1962) in 23S rRNA + S-adenosyl-L-methionine = 5-methylcytidine(1962) in 23S rRNA + S-adenosyl-L-homocysteine + H(+). In terms of biological role, specifically methylates the cytosine at position 1962 (m5C1962) of 23S rRNA. In Shewanella sp. (strain ANA-3), this protein is Ribosomal RNA large subunit methyltransferase I.